The following is a 146-amino-acid chain: Leptin (146 aa).

Residues Cys-96 and Cys-146 are joined by a disulfide bond.

This sequence belongs to the leptin family.

Its subcellular location is the secreted. Functionally, key player in the regulation of energy balance and body weight control. Once released into the circulation, has central and peripheral effects by binding LEPR, found in many tissues, which results in the activation of several major signaling pathways. In the hypothalamus, acts as an appetite-regulating factor that induces a decrease in food intake and an increase in energy consumption by inducing anorexinogenic factors and suppressing orexigenic neuropeptides, also regulates bone mass and secretion of hypothalamo-pituitary-adrenal hormones. In the periphery, increases basal metabolism, influences reproductive function, regulates pancreatic beta-cell function and insulin secretion, is pro-angiogenic for endothelial cell and affects innate and adaptive immunity. In the arcuate nucleus of the hypothalamus, activates by depolarization POMC neurons inducing FOS and SOCS3 expression to release anorexigenic peptides and inhibits by hyperpolarization NPY neurons inducing SOCS3 with a consequent reduction on release of orexigenic peptides. In addition to its known satiety inducing effect, has a modulatory role in nutrient absorption. In the intestine, reduces glucose absorption by enterocytes by activating PKC and leading to a sequential activation of p38, PI3K and ERK signaling pathways which exerts an inhibitory effect on glucose absorption. Acts as a growth factor on certain tissues, through the activation of different signaling pathways increases expression of genes involved in cell cycle regulation such as CCND1, via JAK2-STAT3 pathway, or VEGFA, via MAPK1/3 and PI3K-AKT1 pathways. May also play an apoptotic role via JAK2-STAT3 pathway and up-regulation of BIRC5 expression. Pro-angiogenic, has mitogenic activity on vascular endothelial cells and plays a role in matrix remodeling by regulating the expression of matrix metalloproteinases (MMPs) and tissue inhibitors of metalloproteinases (TIMPs). In innate immunity, modulates the activity and function of neutrophils by increasing chemotaxis and the secretion of oxygen radicals. Increases phagocytosis by macrophages and enhances secretion of pro-inflammatory mediators. Increases cytotoxic ability of NK cells. Plays a pro-inflammatory role, in synergy with IL1B, by inducing NOS2 which promotes the production of IL6, IL8 and Prostaglandin E2, through a signaling pathway that involves JAK2, PI3K, MAP2K1/MEK1 and MAPK14/p38. In adaptive immunity, promotes the switch of memory T-cells towards T helper-1 cell immune responses. Increases CD4(+)CD25(-) T-cell proliferation and reduces autophagy during TCR (T-cell receptor) stimulation, through MTOR signaling pathway activation and BCL2 up-regulation. This Pongo pygmaeus (Bornean orangutan) protein is Leptin (LEP).